We begin with the raw amino-acid sequence, 152 residues long: uncharacterized protein (152 aa).

A helical membrane pass occupies residues 12-34; the sequence is ALLYLGGGLLAMIYGLITFFMAF.

To B.subtilis YfjD.

The protein resides in the membrane. This is an uncharacterized protein from Bacillus subtilis (strain 168).